The following is a 685-amino-acid chain: RING finger protein 145 (685 aa).

Helical transmembrane passes span 53-73, 77-97, 123-143, 151-171, 174-194, 225-245, 275-295, 316-336, 340-360, 384-404, 410-430, 460-480, and 482-502; these read YIAL…LTLP, LVQL…HQLS, FTTA…VMQT, AHLL…IVFI, FAMI…LLVP, LVLP…QIYT, YSLL…LTLC, TEGI…LQVI, FLLS…MLEI, SLCL…CQFF, LLII…TLLI, LLEF…TLFG, and WTVM…WLRA. The RING-type; atypical zinc-finger motif lies at 537 to 575; that stretch reads CSICFQDMKSAVITPCSHFFHAACLKKWLYVQETCPLCH. A disordered region spans residues 582–685; it reads LQPTSSPGTP…VSTSDVNCAS (104 aa). Positions 583-602 are enriched in low complexity; it reads QPTSSPGTPTQGTPAANQNP. The span at 620 to 631 shows a compositional bias: basic and acidic residues; sequence EGIRAEEMKTSA.

It localises to the membrane. This chain is RING finger protein 145 (rnf145), found in Danio rerio (Zebrafish).